We begin with the raw amino-acid sequence, 467 residues long: Cysteine--tRNA ligase (467 aa).

Cysteine 29 lines the Zn(2+) pocket. The 'HIGH' region signature appears at alanine 31–histidine 41. Residues cysteine 207, histidine 232, and glutamate 236 each coordinate Zn(2+). The 'KMSKS' region motif lies at lysine 263–serine 267. Position 266 (lysine 266) interacts with ATP. Residues isoleucine 446–asparagine 467 form a disordered region.

This sequence belongs to the class-I aminoacyl-tRNA synthetase family. Monomer. Requires Zn(2+) as cofactor.

It is found in the cytoplasm. The catalysed reaction is tRNA(Cys) + L-cysteine + ATP = L-cysteinyl-tRNA(Cys) + AMP + diphosphate. The sequence is that of Cysteine--tRNA ligase from Nocardia farcinica (strain IFM 10152).